We begin with the raw amino-acid sequence, 413 residues long: 4-hydroxy-3-methylbut-2-en-1-yl diphosphate synthase (flavodoxin) (413 aa).

The [4Fe-4S] cluster site is built by Cys-298, Cys-301, Cys-344, and Glu-351.

Belongs to the IspG family. It depends on [4Fe-4S] cluster as a cofactor.

The catalysed reaction is (2E)-4-hydroxy-3-methylbut-2-enyl diphosphate + oxidized [flavodoxin] + H2O + 2 H(+) = 2-C-methyl-D-erythritol 2,4-cyclic diphosphate + reduced [flavodoxin]. Its pathway is isoprenoid biosynthesis; isopentenyl diphosphate biosynthesis via DXP pathway; isopentenyl diphosphate from 1-deoxy-D-xylulose 5-phosphate: step 5/6. In terms of biological role, converts 2C-methyl-D-erythritol 2,4-cyclodiphosphate (ME-2,4cPP) into 1-hydroxy-2-methyl-2-(E)-butenyl 4-diphosphate. The chain is 4-hydroxy-3-methylbut-2-en-1-yl diphosphate synthase (flavodoxin) from Koribacter versatilis (strain Ellin345).